Reading from the N-terminus, the 228-residue chain is Claudin-10 (228 aa).

The helical transmembrane segment at 1–21 (MASTASEIIAFMVSISGWVLV) threads the bilayer. At 22–80 (SSTLPTDYWKVSTIDGTVITTATYWANLWKACVTDSTGVSNCKDFPSMLALDGYIQACR) the chain is on the extracellular side. A helical membrane pass occupies residues 81–101 (GLMIAAVSLGFFGSIFALFGM). At 102–115 (KCTKVGGSDKAKAK) the chain is on the cytoplasmic side. A helical membrane pass occupies residues 116–136 (IACLAGIVFILSGLCSMTGCS). The Extracellular segment spans residues 137–160 (LYANKITTEFFDPLFVEQKYELGA). The chain crosses the membrane as a helical span at residues 161–181 (ALFIGWAGASLCIIGGVIFCF). The Cytoplasmic portion of the chain corresponds to 182–228 (SISDNNKTPRYTYNGATSVMSSRTKYHGGEDFKTTNPSKQFDKNAYV).

This sequence belongs to the claudin family. In terms of assembly, can form homodimers both in trans (interaction between CLDN10 molecules in opposing membranes) and in cis (interaction between CLDN10 molecules within one membrane). Interacts with CLDN19. Expressed in the kidney, eccrine sweat glands and in all layers of the epidermis. In the kidney, it is detected in the thick ascending limb of Henle's loop (TAL). In the sweat glands, it is expressed in cells from secretory portions, corresponding to the clear cells.

Its subcellular location is the cell junction. The protein localises to the tight junction. It localises to the cell membrane. The enzyme catalyses Na(+)(in) = Na(+)(out). It carries out the reaction Li(+)(in) = Li(+)(out). It catalyses the reaction K(+)(in) = K(+)(out). The catalysed reaction is Rb(+)(in) = Rb(+)(out). The enzyme catalyses Cs(+)(in) = Cs(+)(out). It carries out the reaction NH4(+)(in) = NH4(+)(out). It catalyses the reaction methylamine(out) = methylamine(in). The catalysed reaction is Mg(2+)(in) = Mg(2+)(out). The enzyme catalyses Ca(2+)(in) = Ca(2+)(out). It carries out the reaction Sr(2+)(in) = Sr(2+)(out). It catalyses the reaction chloride(in) = chloride(out). The catalysed reaction is nitrate(in) = nitrate(out). Forms paracellular channels: polymerizes in tight junction strands with cation- and anion-selective channels through the strands, conveying epithelial permeability in a process known as paracellular tight junction permeability. In terms of biological role, forms cation-selective paracellular channels. In sweat glands and in the thick ascending limb (TAL) of Henle's loop in kidney, it controls paracellular sodium permeability which is essential for proper sweat production and renal function. Its function is as follows. Forms anion-selective paracellular channels. In renal proximal tubules, it conveys selective chloride over hydrogencarbonate anion permeability which is required for renal chloride reabsorption and salt homeostasis. This chain is Claudin-10, found in Homo sapiens (Human).